A 569-amino-acid polypeptide reads, in one-letter code: Dolichol kinase EVAN (569 aa).

Residues 1–22 (MKTTATSFVTGERVVVFVVVSR) lie on the Cytoplasmic side of the membrane. A helical transmembrane segment spans residues 23 to 43 (ILLSLPLSLISHGFSLFLLSL). Topologically, residues 44–67 (SAFLVEIRVETSPFLLSHFSSRRG) are lumenal. Residues 68–88 (ASSGILLGAVTLPSVMISKLV) traverse the membrane as a helical segment. The Cytoplasmic portion of the chain corresponds to 89–108 (QLSRAISIHEAEQDELAHVT). The helical transmembrane segment at 109–129 (MQYWAASASCCAILIYLSVIM) threads the bilayer. The Lumenal portion of the chain corresponds to 130–147 (SQVRKDESLSSSSIWLTR). Residues 148 to 168 (VSLTGTVLYGVACFVSLSMIS) form a helical membrane-spanning segment. The Cytoplasmic portion of the chain corresponds to 169–178 (HTGLNTSLKM). Residues 179-199 (LWMLFHGLAAVKLIRHLLCTF) traverse the membrane as a helical segment. Residues 200–207 (PSCASIGE) are Lumenal-facing. Residues 208-228 (ALLVTSGLVLYFGDFLACTIA) form a helical membrane-spanning segment. Topologically, residues 229–252 (KIFEKLIPVDLVSISYGIKRTETG) are cytoplasmic. Residues 253–273 (IIVQGLLLGLLLFPMVFRFVL) traverse the membrane as a helical segment. Residues 274–296 (HIYESSLRKRDARQRNCSDAAKS) are Lumenal-facing. Asn289 carries N-linked (GlcNAc...) asparagine glycosylation. Residues 297–317 (VLFFVSLLFFMVVAVPSWMQF) form a helical membrane-spanning segment. The Cytoplasmic portion of the chain corresponds to 318-340 (VHDFNQHPFLWVLTFVFSEPLKR). Residues 341 to 361 (LSLCIYWILLIVVSVSRFYNI) traverse the membrane as a helical segment. Residues 362–369 (SRSSKVER) lie on the Lumenal side of the membrane. The helical transmembrane segment at 370–390 (ILLRKYYHLMAVLMFLPALVL) threads the bilayer. Topologically, residues 391–393 (QPK) are cytoplasmic. Residues 394–414 (FLDLAFGAALAVFVALEIIRI) traverse the membrane as a helical segment. The Lumenal segment spans residues 415–440 (WRIQPLGEPLHQFMNAFTDHRDSEHL). The chain crosses the membrane as a helical span at residues 441–461 (IVSHFSLLLGCALPIWMSSGF). Residues 462-464 (NDR) are Cytoplasmic-facing. Residues 465 to 485 (ALSPFAGILSLGIGDTMASMV) form a helical membrane-spanning segment. Residues 486-508 (GHKYGVLRWSKTGKKTVEGTAAG) are Lumenal-facing. The CTP-binding stretch occupies residues 487–503 (HKYGVLRWSKTGKKTVE). A helical membrane pass occupies residues 509–529 (ITSMMAVCFVLVPILASMGYI). The Cytoplasmic portion of the chain corresponds to 530–548 (LSQGWWSLLVAVTATGMLE). The chain crosses the membrane as a helical span at residues 549-569 (AYTAQLDNAFIPLVFYSLLCL).

Belongs to the polyprenol kinase family.

The protein resides in the endoplasmic reticulum membrane. The enzyme catalyses a di-trans,poly-cis-dolichol + CTP = a di-trans,poly-cis-dolichyl phosphate + CDP + H(+). Functionally, essential for pollen development. Involved in protein N-glycosylation in the endoplasmic reticulum (ER), especially in the female gametophyte. Mediates pollen tube (PT) reception in synergids through protein glycosylation. The polypeptide is Dolichol kinase EVAN (Arabidopsis thaliana (Mouse-ear cress)).